The primary structure comprises 272 residues: 3-methyl-2-oxobutanoate hydroxymethyltransferase (272 aa).

Residues Asp-43 and Asp-82 each coordinate Mg(2+). 3-methyl-2-oxobutanoate-binding positions include 43-44 (DS), Asp-82, and Lys-112. Residue Glu-114 participates in Mg(2+) binding. The Proton acceptor role is filled by Glu-179.

It belongs to the PanB family. In terms of assembly, homodecamer; pentamer of dimers. The cofactor is Mg(2+).

Its subcellular location is the cytoplasm. It carries out the reaction 3-methyl-2-oxobutanoate + (6R)-5,10-methylene-5,6,7,8-tetrahydrofolate + H2O = 2-dehydropantoate + (6S)-5,6,7,8-tetrahydrofolate. Its pathway is cofactor biosynthesis; (R)-pantothenate biosynthesis; (R)-pantoate from 3-methyl-2-oxobutanoate: step 1/2. Catalyzes the reversible reaction in which hydroxymethyl group from 5,10-methylenetetrahydrofolate is transferred onto alpha-ketoisovalerate to form ketopantoate. This Staphylococcus aureus (strain COL) protein is 3-methyl-2-oxobutanoate hydroxymethyltransferase.